Reading from the N-terminus, the 794-residue chain is Histone-lysine N-methyltransferase, H3 lysine-9 specific SUVH5 (794 aa).

2 disordered regions span residues Val187–Ile210 and Ser254–Glu276. The segment covering Asn194–Gly203 has biased composition (polar residues). A compositionally biased stretch (basic and acidic residues) spans Pro258–Glu276. The YDG domain occupies Gly365 to Arg515. A Pre-SET domain is found at Lys585–Gly644. The SET domain maps to Ile647–Asn764. Positions Lys778–Tyr794 constitute a Post-SET domain.

Belongs to the class V-like SAM-binding methyltransferase superfamily. Histone-lysine methyltransferase family. Suvar3-9 subfamily. In terms of tissue distribution, expressed in leaves stems and flowers.

Its subcellular location is the nucleus. The protein localises to the chromosome. The protein resides in the centromere. The enzyme catalyses N(6)-methyl-L-lysyl(9)-[histone H3] + S-adenosyl-L-methionine = N(6),N(6)-dimethyl-L-lysyl(9)-[histone H3] + S-adenosyl-L-homocysteine + H(+). It carries out the reaction L-lysyl(9)-[histone H3] + S-adenosyl-L-methionine = N(6)-methyl-L-lysyl(9)-[histone H3] + S-adenosyl-L-homocysteine + H(+). Its function is as follows. Histone methyltransferase. Methylates 'Lys-9' of histone H3. H3 'Lys-9' methylation represents a specific tag for epigenetic transcriptional repression. This is Histone-lysine N-methyltransferase, H3 lysine-9 specific SUVH5 (SUVH5) from Arabidopsis thaliana (Mouse-ear cress).